The following is a 184-amino-acid chain: Photosystem I assembly protein Ycf4 (184 aa).

2 consecutive transmembrane segments (helical) span residues 22 to 42 (VCWAFILFLGSLGFLLVGTSS) and 57 to 77 (IIFFPQGIVMSFYGIAGLFIS).

The protein belongs to the Ycf4 family.

It localises to the plastid. The protein resides in the chloroplast thylakoid membrane. In terms of biological role, seems to be required for the assembly of the photosystem I complex. The polypeptide is Photosystem I assembly protein Ycf4 (Morus indica (Mulberry)).